The following is an 807-amino-acid chain: Leucine--tRNA ligase (807 aa).

The 'HIGH' region motif lies at 38 to 49 (PYPSGSGLHVGH). The short motif at 579-583 (KMSKS) is the 'KMSKS' region element. An ATP-binding site is contributed by Lys-582.

It belongs to the class-I aminoacyl-tRNA synthetase family.

Its subcellular location is the cytoplasm. The catalysed reaction is tRNA(Leu) + L-leucine + ATP = L-leucyl-tRNA(Leu) + AMP + diphosphate. The polypeptide is Leucine--tRNA ligase (Mycoplasmopsis pulmonis (strain UAB CTIP) (Mycoplasma pulmonis)).